The primary structure comprises 133 residues: uncharacterized protein (133 aa).

This is an uncharacterized protein from Aquifex aeolicus (strain VF5).